A 277-amino-acid polypeptide reads, in one-letter code: C2H2-type zinc-finger transcription factor (277 aa).

Disordered regions lie at residues 23–66 (PTMN…AHPP) and 78–146 (MNEP…TDSI). Positions 27-37 (EIETTDNTYPR) are enriched in polar residues. Residues 185-208 (HPCPDCGRVFTRSTARNFHRQSGT) form a C2H2-type; degenerate zinc finger.

Belongs to the GLI C2H2-type zinc-finger protein family.

The protein resides in the nucleus. Its function is as follows. C2H2-type zinc-finger transcription factor that controls the expression of the nonribosomal peptide synthases inpA and inpB, as well as of the other inp cluster-associated genes. Also mediates the expression of the asperfuranone biosynthesis gene cluster by binding to the afoA promoter. Probably recognizes the 5'-CT/C/AAAAGGAT/AT/GG/CA-3' motif in the promoters of teget genes. The polypeptide is C2H2-type zinc-finger transcription factor (Emericella nidulans (strain FGSC A4 / ATCC 38163 / CBS 112.46 / NRRL 194 / M139) (Aspergillus nidulans)).